A 251-amino-acid chain; its full sequence is Ubiquinone/menaquinone biosynthesis C-methyltransferase UbiE (251 aa).

S-adenosyl-L-methionine is bound by residues Thr-74, Asp-95, 123–124, and Ser-140; that span reads NA.

This sequence belongs to the class I-like SAM-binding methyltransferase superfamily. MenG/UbiE family.

The catalysed reaction is a 2-demethylmenaquinol + S-adenosyl-L-methionine = a menaquinol + S-adenosyl-L-homocysteine + H(+). It catalyses the reaction a 2-methoxy-6-(all-trans-polyprenyl)benzene-1,4-diol + S-adenosyl-L-methionine = a 5-methoxy-2-methyl-3-(all-trans-polyprenyl)benzene-1,4-diol + S-adenosyl-L-homocysteine + H(+). Its pathway is quinol/quinone metabolism; menaquinone biosynthesis; menaquinol from 1,4-dihydroxy-2-naphthoate: step 2/2. The protein operates within cofactor biosynthesis; ubiquinone biosynthesis. Methyltransferase required for the conversion of demethylmenaquinol (DMKH2) to menaquinol (MKH2) and the conversion of 2-polyprenyl-6-methoxy-1,4-benzoquinol (DDMQH2) to 2-polyprenyl-3-methyl-6-methoxy-1,4-benzoquinol (DMQH2). The polypeptide is Ubiquinone/menaquinone biosynthesis C-methyltransferase UbiE (Salmonella paratyphi A (strain AKU_12601)).